A 129-amino-acid polypeptide reads, in one-letter code: Succinate dehydrogenase cytochrome b556 subunit (129 aa).

The Cytoplasmic portion of the chain corresponds to 1–26; it reads MIRNVKKQRPVNLDLQTIRFPITAIA. The chain crosses the membrane as a helical span at residues 27–52; that stretch reads SILHRVSGVITFIAVGILLWLLGTSL. Over 53-68 the chain is Periplasmic; sequence SSPEGFQQAADIMDGF. A helical transmembrane segment spans residues 69-89; the sequence is IVKFIMWGILTALAYHVIVGI. His84 serves as a coordination point for heme. The Cytoplasmic portion of the chain corresponds to 90–108; that stretch reads RHMLMDFGYLEETFEAGQR. Residues 109 to 129 traverse the membrane as a helical segment; sequence SAKISFVITVVLSLLAGVLVW.

It belongs to the cytochrome b560 family. In terms of assembly, part of an enzyme complex containing four subunits: a flavoprotein, an iron-sulfur protein, plus two membrane-anchoring proteins, SdhC and SdhD. The complex can form homotrimers. The cofactor is heme.

The protein localises to the cell inner membrane. It participates in carbohydrate metabolism; tricarboxylic acid cycle. In terms of biological role, membrane-anchoring subunit of succinate dehydrogenase (SDH). This is Succinate dehydrogenase cytochrome b556 subunit (sdhC) from Salmonella typhi.